The primary structure comprises 397 residues: MAEGGVPLEKTAIGTYVPPAKPSLIGLSRAEMAERLAAIGIPREQRRMRVQQLWHWMYVRGARTFAEMTSVSKDMRAELEKHVTLDRPEVVAEQISSDGTRKWLLRLPSGDDLEKPHEVECVYIPETDRGTLCVSSQVGCTLNCSFCHTGTQRLVRNLTAGEIVGQIMVARDRLNDWADRETPHGNRLVTNIVMMGMGEPLYNFDAVRDGLLIVADNEGIGISKRRITLSTSGVVPNIVRAGEEIGVMLAISLHAVRDELRDELVPLNRKYPIAELMQACRDYPAASNAKRITFEYVMLKGVNDSLDDARRLVKLLNGIHAKINLIPFNPWPGTRYECSDWDQIEKFSEYVFNAGYSSPVRTPRGRDILAACGQLKSETEKLSARERQALRAMAMTD.

Glu120 acts as the Proton acceptor in catalysis. The region spanning 126 to 369 (ETDRGTLCVS…VRTPRGRDIL (244 aa)) is the Radical SAM core domain. Cysteines 133 and 372 form a disulfide. The [4Fe-4S] cluster site is built by Cys140, Cys144, and Cys147. Residues 198-199 (GE), Ser230, 252-254 (SLH), and Asn329 each bind S-adenosyl-L-methionine. Cys372 (S-methylcysteine intermediate) is an active-site residue.

This sequence belongs to the radical SAM superfamily. RlmN family. The cofactor is [4Fe-4S] cluster.

Its subcellular location is the cytoplasm. It carries out the reaction adenosine(2503) in 23S rRNA + 2 reduced [2Fe-2S]-[ferredoxin] + 2 S-adenosyl-L-methionine = 2-methyladenosine(2503) in 23S rRNA + 5'-deoxyadenosine + L-methionine + 2 oxidized [2Fe-2S]-[ferredoxin] + S-adenosyl-L-homocysteine. The enzyme catalyses adenosine(37) in tRNA + 2 reduced [2Fe-2S]-[ferredoxin] + 2 S-adenosyl-L-methionine = 2-methyladenosine(37) in tRNA + 5'-deoxyadenosine + L-methionine + 2 oxidized [2Fe-2S]-[ferredoxin] + S-adenosyl-L-homocysteine. Specifically methylates position 2 of adenine 2503 in 23S rRNA and position 2 of adenine 37 in tRNAs. m2A2503 modification seems to play a crucial role in the proofreading step occurring at the peptidyl transferase center and thus would serve to optimize ribosomal fidelity. In Nitrobacter winogradskyi (strain ATCC 25391 / DSM 10237 / CIP 104748 / NCIMB 11846 / Nb-255), this protein is Dual-specificity RNA methyltransferase RlmN.